Consider the following 151-residue polypeptide: Ribosome maturation factor RimP (151 aa).

The protein belongs to the RimP family.

The protein localises to the cytoplasm. In terms of biological role, required for maturation of 30S ribosomal subunits. This is Ribosome maturation factor RimP from Haemophilus influenzae (strain PittGG).